Consider the following 431-residue polypeptide: MNLESLSSFMELSKNFRHKSVLEKRQEIKSFLELSYKDFFYNNANEDFLFNMIENYIGYLSFPIGIVKNLKINGKYYSLPIATEESSVVAALNFAAKILENADLRYSLGEVLGISQIYIKSEKDLSKIFVDLGDKIKTWIEPLLTNMNQRGGGFRRLSTRHIKELGIQKLNIYVDTCDAMGANLLNSIAERVAEFIFLEFGYECVLKVLSNDISEFTAKARFVLDFKHLLPGKEDSWNLAKKIELISSIGFYEEERAVTNNKGIMNGITGVCLATFNDTRALEASVHKFASKSGKYFPLSKFYTTDNALVGEIEIPLQVGTKGGVISFNEASILSFKIMNVNSKSEFIGILSCVGLASNFAALRALAFNGIQKGHMRLHVNKILHLLKTKYNISDFEKDKLLLEMERMNIYSFDFAFKILKKIRLENENKV.

Catalysis depends on charge relay system residues E85 and D278. Residue H375 is the Proton donor of the active site.

The protein belongs to the HMG-CoA reductase family.

It catalyses the reaction (R)-mevalonate + 2 NAD(+) + CoA = (3S)-3-hydroxy-3-methylglutaryl-CoA + 2 NADH + 2 H(+). The protein operates within metabolic intermediate metabolism; (R)-mevalonate degradation; (S)-3-hydroxy-3-methylglutaryl-CoA from (R)-mevalonate: step 1/1. Converts HMG-CoA to mevalonate. The protein is Probable 3-hydroxy-3-methylglutaryl-coenzyme A reductase of Borreliella burgdorferi (strain ATCC 35210 / DSM 4680 / CIP 102532 / B31) (Borrelia burgdorferi).